We begin with the raw amino-acid sequence, 391 residues long: Choline/ethanolaminephosphotransferase 1 (391 aa).

Residues 1-49 are Lumenal-facing; it reads MGYFVPDSHIENLKSYKYQSEDRSLVSKYFLKPFWQRFCHIFPTWMAPN. Residues 50–69 traverse the membrane as a helical segment; that stretch reads IITLSGFAFIVINVLTVFYY. At 70–172 the chain is on the cytoplasmic side; it reads DPNLNTDTPR…YHTHTLYLSE (103 aa). A helical membrane pass occupies residues 173–193; it reads FSGPVEGILIVCVSLILTGIY. Residues 194 to 211 lie on the Lumenal side of the membrane; it reads GKQVIWHTYLFTITVGDK. The chain crosses the membrane as a helical span at residues 212 to 232; sequence VIDVDTLDIVFSLAVFGLVMN. Over 233–264 the chain is Cytoplasmic; that stretch reads ALSAKRNVDKYYRNSTSSANNITQIEQDSAIK. Residues 265–282 traverse the membrane as a helical segment; sequence GLLPFFAYYASIALLVWM. Over 283–285 the chain is Lumenal; that stretch reads QPS. The chain crosses the membrane as a helical span at residues 286–308; sequence FITLSFILSVGFTGAFTVGRIIV. The Cytoplasmic portion of the chain corresponds to 309–321; that stretch reads CHLTKQSFPMFNA. A helical membrane pass occupies residues 322-342; that stretch reads PMLIPLCQIVLYKICLSLWGI. The Lumenal segment spans residues 343-346; the sequence is ESNK. The helical transmembrane segment at 347 to 367 threads the bilayer; the sequence is IVFALSWLGFGLSLGVHIMFM. Over 368 to 391 the chain is Cytoplasmic; the sequence is NDIIHEFTEYLDVYALSIKRSKLT.

This sequence belongs to the CDP-alcohol phosphatidyltransferase class-I family. The cofactor is Mg(2+).

The protein resides in the golgi apparatus membrane. The enzyme catalyses CDP-ethanolamine + a 1,2-diacyl-sn-glycerol = a 1,2-diacyl-sn-glycero-3-phosphoethanolamine + CMP + H(+). The catalysed reaction is CDP-choline + a 1,2-diacyl-sn-glycerol = a 1,2-diacyl-sn-glycero-3-phosphocholine + CMP + H(+). It catalyses the reaction CDP-N-methylethanolamine + a 1,2-diacyl-sn-glycerol = a 1,2-diacyl-sn-glycero-3-phospho-N-methylethanolamine + CMP + H(+). It carries out the reaction CDP-N,N-dimethylethanolamine + a 1,2-diacyl-sn-glycerol = a 1,2-diacyl-sn-glycero-3-phospho-N,N-dimethylethanolamine + CMP + H(+). The enzyme catalyses 1,2-di-(9Z-octadecenoyl)-glycerol + CDP-choline = 1,2-di-(9Z-octadecenoyl)-sn-glycero-3-phosphocholine + CMP + H(+). The catalysed reaction is 1,2-di-(9Z-octadecenoyl)-glycerol + CDP-ethanolamine = 1,2-di-(9Z-octadecenoyl)-sn-glycero-3-phosphoethanolamine + CMP + H(+). Its pathway is phospholipid metabolism; phosphatidylethanolamine biosynthesis; phosphatidylethanolamine from ethanolamine: step 3/3. It participates in phospholipid metabolism; phosphatidylcholine biosynthesis; phosphatidylcholine from phosphocholine: step 2/2. With respect to regulation, requires a divalent cation activator, and is inhibited by CMP. Activated by phospholipids, especially phosphatidylcholine. In terms of biological role, catalyzes the final step in the CDP-ethanolamine route leading to phosphatidylethanolamine (PE). Can also catalyze the formation of phosphatidylcholine (PC) from CDP-choline, but does not substantially contribute to PC biosynthesis. Preferentially uses CDP-dimethylethanolamine and CDP-propanolamine as aminoalcohol substrates. Shows highest activity toward di-unsaturated diacylglycerol species as lipid substrates. The CDP-ethanolamine pathway may play a role in maintaining the proper PE species distribution. The chain is Choline/ethanolaminephosphotransferase 1 (EPT1) from Saccharomyces cerevisiae (strain ATCC 204508 / S288c) (Baker's yeast).